Consider the following 383-residue polypeptide: ATP phosphoribosyltransferase regulatory subunit (383 aa).

Belongs to the class-II aminoacyl-tRNA synthetase family. HisZ subfamily. In terms of assembly, heteromultimer composed of HisG and HisZ subunits.

It localises to the cytoplasm. It functions in the pathway amino-acid biosynthesis; L-histidine biosynthesis; L-histidine from 5-phospho-alpha-D-ribose 1-diphosphate: step 1/9. In terms of biological role, required for the first step of histidine biosynthesis. May allow the feedback regulation of ATP phosphoribosyltransferase activity by histidine. The chain is ATP phosphoribosyltransferase regulatory subunit (hisZ) from Neisseria meningitidis serogroup B (strain ATCC BAA-335 / MC58).